Reading from the N-terminus, the 242-residue chain is Succinyl-CoA:3-ketoacid coenzyme A transferase subunit A (242 aa).

Residue 33–39 (GGFGLCG) coordinates CoA.

Belongs to the 3-oxoacid CoA-transferase subunit A family. In terms of assembly, heterodimer of a subunit A and a subunit B.

The catalysed reaction is a 3-oxo acid + succinyl-CoA = a 3-oxoacyl-CoA + succinate. It participates in bacterial outer membrane biogenesis; lipopolysaccharide biosynthesis. This Xanthomonas campestris pv. campestris (strain ATCC 33913 / DSM 3586 / NCPPB 528 / LMG 568 / P 25) protein is Succinyl-CoA:3-ketoacid coenzyme A transferase subunit A (lpsI).